Consider the following 240-residue polypeptide: UDP-2,3-diacylglucosamine hydrolase (240 aa).

Mn(2+) contacts are provided by Asp8, His10, Asp41, Asn79, and His114. 79–80 (NR) serves as a coordination point for substrate. Positions 122, 160, 164, 167, and 195 each coordinate substrate. Positions 195 and 197 each coordinate Mn(2+).

This sequence belongs to the LpxH family. It depends on Mn(2+) as a cofactor.

The protein localises to the cell inner membrane. It catalyses the reaction UDP-2-N,3-O-bis[(3R)-3-hydroxytetradecanoyl]-alpha-D-glucosamine + H2O = 2-N,3-O-bis[(3R)-3-hydroxytetradecanoyl]-alpha-D-glucosaminyl 1-phosphate + UMP + 2 H(+). Its pathway is glycolipid biosynthesis; lipid IV(A) biosynthesis; lipid IV(A) from (3R)-3-hydroxytetradecanoyl-[acyl-carrier-protein] and UDP-N-acetyl-alpha-D-glucosamine: step 4/6. In terms of biological role, hydrolyzes the pyrophosphate bond of UDP-2,3-diacylglucosamine to yield 2,3-diacylglucosamine 1-phosphate (lipid X) and UMP by catalyzing the attack of water at the alpha-P atom. Involved in the biosynthesis of lipid A, a phosphorylated glycolipid that anchors the lipopolysaccharide to the outer membrane of the cell. The protein is UDP-2,3-diacylglucosamine hydrolase of Escherichia coli O81 (strain ED1a).